The chain runs to 616 residues: Membrane protein insertase YidC (616 aa).

A helical transmembrane segment spans residues 9–29 (ILAVILSGLVLIAWQYFYNVP). Residues 37-80 (QQQAQAELQKTTPQPTASATPGATPQSGGAAQPSTPAAGQQAQP) are disordered. Residues 44 to 71 (LQKTTPQPTASATPGATPQSGGAAQPST) are compositionally biased toward polar residues. The next 4 membrane-spanning stretches (helical) occupy residues 388–408 (FFGN…LLFF), 462–482 (LPVV…FVTI), 520–540 (VFGH…TMWF), and 559–579 (WMPL…VIYW).

Belongs to the OXA1/ALB3/YidC family. Type 1 subfamily. Interacts with the Sec translocase complex via SecD. Specifically interacts with transmembrane segments of nascent integral membrane proteins during membrane integration.

Its subcellular location is the cell inner membrane. Functionally, required for the insertion and/or proper folding and/or complex formation of integral membrane proteins into the membrane. Involved in integration of membrane proteins that insert both dependently and independently of the Sec translocase complex, as well as at least some lipoproteins. Aids folding of multispanning membrane proteins. This is Membrane protein insertase YidC from Bradyrhizobium diazoefficiens (strain JCM 10833 / BCRC 13528 / IAM 13628 / NBRC 14792 / USDA 110).